The chain runs to 152 residues: Superoxide dismutase [Cu-Zn] (152 aa).

Positions 45, 47, and 62 each coordinate Cu cation. Cys-56 and Cys-145 are joined by a disulfide. The Zn(2+) site is built by His-62, His-70, His-79, and Asp-82. Position 119 (His-119) interacts with Cu cation.

Belongs to the Cu-Zn superoxide dismutase family. As to quaternary structure, homodimer. Cu cation is required as a cofactor. Zn(2+) serves as cofactor.

The protein resides in the cytoplasm. It catalyses the reaction 2 superoxide + 2 H(+) = H2O2 + O2. Its function is as follows. Destroys radicals which are normally produced within the cells and which are toxic to biological systems. The sequence is that of Superoxide dismutase [Cu-Zn] (SODCC) from Carica papaya (Papaya).